A 541-amino-acid chain; its full sequence is Acyl-CoA ligase M9 (541 aa).

186 to 197 serves as a coordination point for AMP; it reads AMSTSGTTGLPK. An AMP-binding region spans residues 445–519; sequence ELEAVLHQMP…DSLPRNSSGK (75 aa).

The protein belongs to the ATP-dependent AMP-binding enzyme family.

It functions in the pathway secondary metabolite biosynthesis. Its function is as follows. Acyl-CoA ligase; part of the gene cluster that mediates the biosynthesis of squalestatin S1 (SQS1, also known as zaragozic acid A), a heavily oxidized fungal polyketide that offers potent cholesterol lowering activity by targeting squalene synthase (SS). SQS1 is composed of a 2,8-dioxobicyclic[3.2.1]octane-3,4,5-tricarboxyclic acid core that is connected to two lipophilic polyketide arms. These initial steps feature the priming of an unusual benzoic acid starter unit onto the highly reducing polyketide synthase pks2, followed by oxaloacetate extension and product release to generate a tricarboxylic acid containing product. The phenylalanine ammonia lyase (PAL) M7 and the acyl-CoA ligase M9 are involved in transforming phenylalanine into benzoyl-CoA. The citrate synthase-like protein R3 is involved in connecting the C-alpha-carbons of the hexaketide chain and oxaloacetate to afford the tricarboxylic acid unit. The potential hydrolytic enzymes, M8 and M10, are in close proximity to pks2 and may participate in product release. On the other side, the tetraketide arm is synthesized by a the squalestatin tetraketide synthase pks1 and enzymatically esterified to the core in the last biosynthetic step, by the acetyltransferase M4. The biosynthesis of the tetraketide must involve 3 rounds of chain extension. After the first and second rounds methyl-transfer occurs, and in all rounds of extension the ketoreductase and dehydratase are active. The enoyl reductase and C-MeT of pks1 are not active in the final round of extension. The acetyltransferase M4 appears to have a broad substrate selectivity for its acyl CoA substrate, allowing the in vitro synthesis of novel squalestatins. The biosynthesis of SQS1 requires several oxidative steps likely performed by oxidoreductases M1, R1 and R2. Finally, in support of the identification of the cluster as being responsible for SQS1 production, the cluster contains a gene encoding a putative squalene synthase (SS) R6, suggesting a likely mechanism for self-resistance. The polypeptide is Acyl-CoA ligase M9 (Phoma sp. (strain ATCC 20986 / MF5453)).